Consider the following 257-residue polypeptide: Imidazole glycerol phosphate synthase subunit HisF (257 aa).

Catalysis depends on residues Asp-11 and Asp-130.

The protein belongs to the HisA/HisF family. Heterodimer of HisH and HisF.

Its subcellular location is the cytoplasm. It carries out the reaction 5-[(5-phospho-1-deoxy-D-ribulos-1-ylimino)methylamino]-1-(5-phospho-beta-D-ribosyl)imidazole-4-carboxamide + L-glutamine = D-erythro-1-(imidazol-4-yl)glycerol 3-phosphate + 5-amino-1-(5-phospho-beta-D-ribosyl)imidazole-4-carboxamide + L-glutamate + H(+). Its pathway is amino-acid biosynthesis; L-histidine biosynthesis; L-histidine from 5-phospho-alpha-D-ribose 1-diphosphate: step 5/9. In terms of biological role, IGPS catalyzes the conversion of PRFAR and glutamine to IGP, AICAR and glutamate. The HisF subunit catalyzes the cyclization activity that produces IGP and AICAR from PRFAR using the ammonia provided by the HisH subunit. The chain is Imidazole glycerol phosphate synthase subunit HisF from Shewanella putrefaciens (strain CN-32 / ATCC BAA-453).